Reading from the N-terminus, the 329-residue chain is tRNA N6-adenosine threonylcarbamoyltransferase (329 aa).

Residues H108, H112, and Y129 each coordinate Fe cation. Residues 129–133 (YVSGG), D161, E182, and S261 each bind substrate. D289 provides a ligand contact to Fe cation.

The protein belongs to the KAE1 / TsaD family. The cofactor is Fe(2+).

It localises to the cytoplasm. It catalyses the reaction L-threonylcarbamoyladenylate + adenosine(37) in tRNA = N(6)-L-threonylcarbamoyladenosine(37) in tRNA + AMP + H(+). In terms of biological role, required for the formation of a threonylcarbamoyl group on adenosine at position 37 (t(6)A37) in tRNAs that read codons beginning with adenine. Is probably involved in the transfer of the threonylcarbamoyl moiety of threonylcarbamoyl-AMP (TC-AMP) to the N6 group of A37. The polypeptide is tRNA N6-adenosine threonylcarbamoyltransferase (Ignicoccus hospitalis (strain KIN4/I / DSM 18386 / JCM 14125)).